The sequence spans 140 residues: Nucleoside diphosphate kinase (140 aa).

Residues lysine 11, phenylalanine 59, arginine 87, threonine 93, arginine 104, and asparagine 114 each coordinate ATP. Histidine 117 (pros-phosphohistidine intermediate) is an active-site residue.

This sequence belongs to the NDK family. As to quaternary structure, homotetramer. It depends on Mg(2+) as a cofactor.

The protein resides in the cytoplasm. It catalyses the reaction a 2'-deoxyribonucleoside 5'-diphosphate + ATP = a 2'-deoxyribonucleoside 5'-triphosphate + ADP. The enzyme catalyses a ribonucleoside 5'-diphosphate + ATP = a ribonucleoside 5'-triphosphate + ADP. In terms of biological role, major role in the synthesis of nucleoside triphosphates other than ATP. The ATP gamma phosphate is transferred to the NDP beta phosphate via a ping-pong mechanism, using a phosphorylated active-site intermediate. This chain is Nucleoside diphosphate kinase, found in Methylobacterium radiotolerans (strain ATCC 27329 / DSM 1819 / JCM 2831 / NBRC 15690 / NCIMB 10815 / 0-1).